The following is a 90-amino-acid chain: MKKKGGRKILGFMVKEEKEENRGSVEFQVFSFTNKIRRLASHLELHKKDFSSERGLRILLGKRRRLLAYLAKKNRVRYKKLISQLNIREQ.

Belongs to the universal ribosomal protein uS15 family. Part of the 30S ribosomal subunit.

The protein resides in the plastid. Its subcellular location is the chloroplast. In Lolium perenne (Perennial ryegrass), this protein is Small ribosomal subunit protein uS15c (rps15-A).